The sequence spans 72 residues: Translation initiation factor IF-1 (72 aa).

The 72-residue stretch at 1–72 (MSKEEVLEFS…TKGRIIYRYK (72 aa)) folds into the S1-like domain.

Belongs to the IF-1 family. Component of the 30S ribosomal translation pre-initiation complex which assembles on the 30S ribosome in the order IF-2 and IF-3, IF-1 and N-formylmethionyl-tRNA(fMet); mRNA recruitment can occur at any time during PIC assembly.

Its subcellular location is the cytoplasm. Functionally, one of the essential components for the initiation of protein synthesis. Stabilizes the binding of IF-2 and IF-3 on the 30S subunit to which N-formylmethionyl-tRNA(fMet) subsequently binds. Helps modulate mRNA selection, yielding the 30S pre-initiation complex (PIC). Upon addition of the 50S ribosomal subunit IF-1, IF-2 and IF-3 are released leaving the mature 70S translation initiation complex. This chain is Translation initiation factor IF-1, found in Bartonella henselae (strain ATCC 49882 / DSM 28221 / CCUG 30454 / Houston 1) (Rochalimaea henselae).